An 86-amino-acid chain; its full sequence is Small ribosomal subunit protein bS16 (86 aa).

Belongs to the bacterial ribosomal protein bS16 family.

The sequence is that of Small ribosomal subunit protein bS16 from Thermoanaerobacter pseudethanolicus (strain ATCC 33223 / 39E) (Clostridium thermohydrosulfuricum).